A 117-amino-acid polypeptide reads, in one-letter code: Large ribosomal subunit protein bL20c (117 aa).

It belongs to the bacterial ribosomal protein bL20 family.

It localises to the plastid. The protein localises to the chloroplast. Binds directly to 23S ribosomal RNA and is necessary for the in vitro assembly process of the 50S ribosomal subunit. It is not involved in the protein synthesizing functions of that subunit. The sequence is that of Large ribosomal subunit protein bL20c from Citrus sinensis (Sweet orange).